We begin with the raw amino-acid sequence, 38 residues long: Beta-galactosidase (38 aa).

It belongs to the glycosyl hydrolase 35 family. In terms of assembly, heterodimer of a large and a small subunit. In terms of processing, the small subunit is N-glycosylated.

It catalyses the reaction Hydrolysis of terminal non-reducing beta-D-galactose residues in beta-D-galactosides.. Involved in cell wall degradation. Degrades polysaccharides containing beta-(1--&gt;4)-linked galactans, acting as an exo-(1--&gt;4)-beta-D-galactanase. The chain is Beta-galactosidase from Hordeum vulgare (Barley).